The following is a 203-amino-acid chain: Transcriptional regulator GfcR (203 aa).

The protein belongs to the purine/pyrimidine phosphoribosyltransferase family. GfcR subfamily.

The sequence is that of Transcriptional regulator GfcR from Methanothrix thermoacetophila (strain DSM 6194 / JCM 14653 / NBRC 101360 / PT) (Methanosaeta thermophila).